The primary structure comprises 305 residues: Glycine--tRNA ligase alpha subunit (305 aa).

The protein belongs to the class-II aminoacyl-tRNA synthetase family. Tetramer of two alpha and two beta subunits.

It is found in the cytoplasm. It carries out the reaction tRNA(Gly) + glycine + ATP = glycyl-tRNA(Gly) + AMP + diphosphate. In Streptococcus gordonii (strain Challis / ATCC 35105 / BCRC 15272 / CH1 / DL1 / V288), this protein is Glycine--tRNA ligase alpha subunit.